A 323-amino-acid chain; its full sequence is Calcium homeostasis modulator protein 2 (323 aa).

Over 1 to 21 (MAALIAENFRFLSLFFKSKDV) the chain is Cytoplasmic. Positions 14 to 39 (LFFKSKDVMIFNGLVALGTVGSQELF) are central pore. The helical transmembrane segment at 22-43 (MIFNGLVALGTVGSQELFTVVA) threads the bilayer. Topologically, residues 44–52 (FHCPCSPAR) are extracellular. Intrachain disulfides connect Cys46/Cys130 and Cys48/Cys162. A helical membrane pass occupies residues 53–76 (NYLYGLAAIGVPALALFLIGVILN). At 77–101 (NHTWNLVAECQYRRTKNCSAAPNFL) the chain is on the cytoplasmic side. Residues 102-132 (LLSSIVGRAAVAPVTWSVISLLRGEAYVCAL) form a helical membrane-spanning segment. Over 133 to 179 (SEFVNPHSLMVGERSFPVAHATEILARFPCGEGPANLSVFREEVSRR) the chain is Extracellular. The interval 145 to 152 (ERSFPVAH) is hemichannel docking. The helical transmembrane segment at 180–206 (LKYESQLFGWLLIGVVAILVFLTKCLK) threads the bilayer. Topologically, residues 207–323 (HYCSPLSYRQ…DHVEMSLLPS (117 aa)) are cytoplasmic. The segment at 214–251 (YRQEAYWAQYRANEDQLFQRTAEVHSRVLAANNVRRFF) is intersubunit interaction.

Belongs to the CALHM family. As to quaternary structure, homo-undecamer. Two undecameric hemichannels can assemble in a head-to-head manner to form a gap junction.

The protein localises to the cell membrane. The catalysed reaction is ATP(in) = ATP(out). In terms of biological role, pore-forming subunit of Ca(2+) homeostasis modulator channels. Mediates ATP release from astrocytes and ATP-induced Ca(2+) influx in microglia thus regulating neuronal ATP and Ca(2+) homeostasis, synaptic transmission and neuroinflammatory response. May form intercellular gap junctions. The gating mechanism remains unknown. The polypeptide is Calcium homeostasis modulator protein 2 (CALHM2) (Bos taurus (Bovine)).